A 25-amino-acid polypeptide reads, in one-letter code: Caerin-1.6 (25 aa).

Position 25 is a leucine amide (Leu25).

The protein belongs to the frog skin active peptide (FSAP) family. Caerin subfamily. As to expression, expressed by the skin dorsal glands.

Its subcellular location is the secreted. Antimicrobial peptide. Adopts an alpha helical conformation which can disrupt bacterial membranes. Strongly inhibits the formation of NO by neuronal nitric oxide synthase (nNOS) at micromolar concentrations. Acts by a non-competitive mechanism, probably by binding to calcium/calmodulin and as a consequence blocking calmodulin attachment to nNOS. In terms of biological role, does not show antimicrobial activity. This chain is Caerin-1.6, found in Ranoidea chloris (Red-eyed tree frog).